The following is a 435-amino-acid chain: Probable histidine--tRNA ligase, cytoplasmic (435 aa).

The protein belongs to the class-II aminoacyl-tRNA synthetase family.

The protein localises to the cytoplasm. It carries out the reaction tRNA(His) + L-histidine + ATP = L-histidyl-tRNA(His) + AMP + diphosphate + H(+). This chain is Probable histidine--tRNA ligase, cytoplasmic, found in Encephalitozoon cuniculi (strain GB-M1) (Microsporidian parasite).